The following is a 165-amino-acid chain: Thiol peroxidase (165 aa).

Positions Arg18 to Lys164 constitute a Thioredoxin domain. Cys60 functions as the Cysteine sulfenic acid (-SOH) intermediate in the catalytic mechanism. A disulfide bond links Cys60 and Cys94.

It belongs to the peroxiredoxin family. Tpx subfamily. In terms of assembly, homodimer.

It carries out the reaction a hydroperoxide + [thioredoxin]-dithiol = an alcohol + [thioredoxin]-disulfide + H2O. Its function is as follows. Thiol-specific peroxidase that catalyzes the reduction of hydrogen peroxide and organic hydroperoxides to water and alcohols, respectively. Plays a role in cell protection against oxidative stress by detoxifying peroxides. The sequence is that of Thiol peroxidase from Listeria monocytogenes serovar 1/2a (strain ATCC BAA-679 / EGD-e).